Here is a 418-residue protein sequence, read N- to C-terminus: Inhibitor of growth protein 3 (418 aa).

Residues 127–165 (DTPSQPVNNHHAHSHTPVEKRKYNPTSHHTTTDHIPEKK) form a disordered region. Residues K148, K165, and K167 each participate in a glycyl lysine isopeptide (Lys-Gly) (interchain with G-Cter in SUMO2) cross-link. Residues 156 to 165 (TTTDHIPEKK) show a composition bias toward basic and acidic residues. N6-acetyllysine is present on K181. Residue K256 forms a Glycyl lysine isopeptide (Lys-Gly) (interchain with G-Cter in SUMO2) linkage. K264 is modified (N6-acetyllysine). The segment at 286-325 (TQNASSSAADSRSGRKSKNNNKSSSQQSSSSSSSSSLSSC) is disordered. Residues 305 to 325 (NNKSSSQQSSSSSSSSSLSSC) show a composition bias toward low complexity. Residues 360–409 (PRYCICNQVSYGEMVGCDNQDCPIEWFHYGCVGLTEAPKGKWYCPQCTAA) form a PHD-type zinc finger. Zn(2+)-binding residues include C363, C365, C376, C381, H387, C390, C403, and C406.

Belongs to the ING family. In terms of assembly, interacts with H3K4me3 and to a lesser extent with H3K4me2. Component of the NuA4 histone acetyltransferase complex which contains the catalytic subunit KAT5/TIP60 and the subunits EP400, TRRAP/PAF400, BRD8/SMAP, EPC1, DMAP1/DNMAP1, RUVBL1/TIP49, RUVBL2, ING3, actin, ACTL6A/BAF53A, MORF4L1/MRG15, MORF4L2/MRGX, MRGBP, YEATS4/GAS41, VPS72/YL1 and MEAF6. The NuA4 complex interacts with MYC and the adenovirus E1A protein. HTATTIP/TIP60, EPC1, and ING3 together constitute a minimal HAT complex termed Piccolo NuA4. Component of a SWR1-like complex. As to expression, expressed in brain, heart, kidney, liver, lung, ovaries, placenta, prostate, skeletal muscle, small intestine, spleen, testis and thymus.

The protein localises to the nucleus. Component of the NuA4 histone acetyltransferase (HAT) complex which is involved in transcriptional activation of select genes principally by acetylation of nucleosomal histones H4 and H2A. This modification may both alter nucleosome - DNA interactions and promote interaction of the modified histones with other proteins which positively regulate transcription. This complex may be required for the activation of transcriptional programs associated with oncogene and proto-oncogene mediated growth induction, tumor suppressor mediated growth arrest and replicative senescence, apoptosis, and DNA repair. NuA4 may also play a direct role in DNA repair when directly recruited to sites of DNA damage. Component of a SWR1-like complex that specifically mediates the removal of histone H2A.Z/H2AZ1 from the nucleosome. The sequence is that of Inhibitor of growth protein 3 (ING3) from Homo sapiens (Human).